A 392-amino-acid chain; its full sequence is Protein trapped in endoderm-1 (392 aa).

Residues 1-39 (MDQDMGMATGYFQDADMQMDEPAAATQSIYPHSATLFAA) lie on the Extracellular side of the membrane. A helical transmembrane segment spans residues 40–60 (ISACVFVTIGVLGNLITLLAL). The Cytoplasmic segment spans residues 61 to 73 (LKSPTIREHATTA). Residues 74 to 94 (FVISLSISDLLFCSFSLPLTA) form a helical membrane-spanning segment. Over 95–110 (VRFFQESWTFGTTLCK) the chain is Extracellular. A helical transmembrane segment spans residues 111–131 (IFPVIFYGNVAVSLLSMVGIT). At 132–156 (LNRYILIACHSRYSQIYKPKFITLQ) the chain is on the cytoplasmic side. The helical transmembrane segment at 157–177 (LLFVWAVSFLLLLPPILGIWG) threads the bilayer. The Extracellular portion of the chain corresponds to 178–202 (EMGLDEATFSCTILKKEGRSIKKTL). Residues 203 to 223 (FVIGFLLPCLVIIVSYSCIYI) form a helical membrane-spanning segment. The Cytoplasmic segment spans residues 224-268 (TVLHQKKKIRNHDNFQIAAAKGSSSSGGGSYMTTTCTRKAREDNR). The chain crosses the membrane as a helical span at residues 269–289 (LTVMMVTIFLCFLVCFLPLML). At 290 to 302 (ANVVDDERNTSYP) the chain is on the extracellular side. An N-linked (GlcNAc...) asparagine glycan is attached at asparagine 298. Residues 303–323 (WLHIIASVMAWASSVINPIIY) traverse the membrane as a helical segment. At 324–392 (AASNRNYRVA…INQMCQTYSV (69 aa)) the chain is on the cytoplasmic side. Serine 359, serine 362, and serine 366 each carry phosphoserine. Residue threonine 372 is modified to Phosphothreonine.

It belongs to the G-protein coupled receptor 1 family. As to expression, in embryos, expression is seen at highest levels in the cuprophilic cells and at lower levels in the amnioserosa, developing CNS, cardiac mesoderm primordium and midline glia.

It localises to the cell membrane. Functionally, essential for the first active step of germ cell migration: transepithelial migration of germ cells through the posterior midgut (PMG) epithelium. The sequence is that of Protein trapped in endoderm-1 (Tre1) from Drosophila melanogaster (Fruit fly).